The primary structure comprises 190 residues: Ferric nitrobindin-like protein (190 aa).

The GXWXGXG signature appears at 20-26 (GNWAGAG).

Belongs to the nitrobindin family.

The protein is Ferric nitrobindin-like protein of Streptomyces griseus subsp. griseus (strain JCM 4626 / CBS 651.72 / NBRC 13350 / KCC S-0626 / ISP 5235).